The sequence spans 103 residues: Cell division suppressor protein YneA (103 aa).

The LysM domain occupies 36 to 87; sequence VKIEVQEGDTLWELADRIKGGKTADKHKFIEWVADKNNLPTSVIKPGDVLIL.

It belongs to the YneA family.

The protein localises to the cytoplasm. In terms of biological role, inhibits cell division during the SOS response. Affects a later stage of the cell division protein assembly, after the assembly of the Z ring, by probably suppressing recruitment of FtsL and/or DivIC to the division machinery. In Bacillus licheniformis (strain ATCC 14580 / DSM 13 / JCM 2505 / CCUG 7422 / NBRC 12200 / NCIMB 9375 / NCTC 10341 / NRRL NRS-1264 / Gibson 46), this protein is Cell division suppressor protein YneA.